The following is a 332-amino-acid chain: DNA-directed RNA polymerase subunit alpha (332 aa).

The interval 1–232 (MQVSNFLKPR…DQLTAFVELE (232 aa)) is alpha N-terminal domain (alpha-NTD). An alpha C-terminal domain (alpha-CTD) region spans residues 246–332 (IDPVLLQPID…LREEETKVTA (87 aa)).

It belongs to the RNA polymerase alpha chain family. In terms of assembly, homodimer. The RNAP catalytic core consists of 2 alpha, 1 beta, 1 beta' and 1 omega subunit. When a sigma factor is associated with the core the holoenzyme is formed, which can initiate transcription.

It catalyses the reaction RNA(n) + a ribonucleoside 5'-triphosphate = RNA(n+1) + diphosphate. In terms of biological role, DNA-dependent RNA polymerase catalyzes the transcription of DNA into RNA using the four ribonucleoside triphosphates as substrates. This Nitrosococcus oceani (strain ATCC 19707 / BCRC 17464 / JCM 30415 / NCIMB 11848 / C-107) protein is DNA-directed RNA polymerase subunit alpha.